A 410-amino-acid chain; its full sequence is Elongation factor Tu, chloroplastic (410 aa).

The 206-residue stretch at 10-215 (KPHINIGTIG…MVDKYFPTPE (206 aa)) folds into the tr-type G domain. Residues 19 to 26 (GHVDHGKT) are G1. 19–26 (GHVDHGKT) is a GTP binding site. Thr-26 is a binding site for Mg(2+). Positions 61-65 (GITIN) are G2. The interval 82–85 (DCPG) is G3. Residues 82 to 86 (DCPGH) and 137 to 140 (NKAD) contribute to the GTP site. The tract at residues 137 to 140 (NKAD) is G4. The segment at 175–177 (SAL) is G5.

This sequence belongs to the TRAFAC class translation factor GTPase superfamily. Classic translation factor GTPase family. EF-Tu/EF-1A subfamily.

The protein localises to the plastid. Its subcellular location is the chloroplast. The catalysed reaction is GTP + H2O = GDP + phosphate + H(+). Its function is as follows. GTP hydrolase that promotes the GTP-dependent binding of aminoacyl-tRNA to the A-site of ribosomes during protein biosynthesis. This is Elongation factor Tu, chloroplastic (tufA) from Cyanidium caldarium (Red alga).